The following is a 614-amino-acid chain: MSLAKRFVHLRKASPSFCLRGIYFSGLSYDGYREKLSRNALLHLKLDEAVDLFGEMVKSRPFPSIVEFSKLLSAIAKMKKFDLVISFGEKMEILGVSHNLYTYNIMINCLCRRSQLSFALAILGKMMKLGYGPSIVTLNSLLNGFCHGNRISEAVALVDQMVEMGYQPDTVTFTTLVHGLFQHNKASEAVALVERMVVKGCQPDLVTYGAVINGLCKRGEPDLALNLLNKMEKGKIEADVVIYSTVIDSLCKYRHVDDALNLFTEMDNKGIRPDVFTYSSLISCLCNYGRWSDASRLLSDMLERKINPNVVTFNSLIDAFAKEGKLIEAEKLFDEMIQRSIDPNIVTYNSLINGFCMHDRLDEAQQIFTLMVSKDCLPDVVTYNTLINGFCKAKKVVDGMELFRDMSRRGLVGNTVTYTTLIHGFFQASDCDNAQMVFKQMVSDGVHPNIMTYNTLLDGLCKNGKLEKAMVVFEYLQKSKMEPDIYTYNIMSEGMCKAGKVEDGWDLFCSLSLKGVKPDVIAYNTMISGFCKKGLKEEAYTLFIKMKEDGPLPDSGTYNTLIRAHLRDGDKAASAELIKEMRSCRFAGDASTYGLVTDMLHDGRLDKGFLEVLS.

The N-terminal 7 residues, 1–7, are a transit peptide targeting the mitochondrion; it reads MSLAKRF. PPR repeat units lie at residues 64–98, 99–133, 134–168, 169–203, 204–238, 239–273, 274–308, 309–343, 344–378, 379–413, 414–448, 449–483, 484–518, 519–553, and 554–588; these read SIVE…GVSH, NLYT…GYGP, SIVT…GYQP, DTVT…GCQP, DLVT…KIEA, DVVI…GIRP, DVFT…KINP, NVVT…SIDP, NIVT…DCLP, DVVT…GLVG, NTVT…GVHP, NIMT…KMEP, DIYT…GVKP, DVIA…GPLP, and DSGT…RFAG.

The protein belongs to the PPR family. P subfamily.

It is found in the mitochondrion. This chain is Pentatricopeptide repeat-containing protein At1g63080, mitochondrial, found in Arabidopsis thaliana (Mouse-ear cress).